A 73-amino-acid polypeptide reads, in one-letter code: Large ribosomal subunit protein bL31 (73 aa).

It belongs to the bacterial ribosomal protein bL31 family. Type A subfamily. Part of the 50S ribosomal subunit.

Binds the 23S rRNA. This chain is Large ribosomal subunit protein bL31, found in Brucella abortus (strain 2308).